Here is a 296-residue protein sequence, read N- to C-terminus: Fructose-bisphosphate aldolase class 1 (296 aa).

Glu-175 acts as the Proton acceptor in catalysis. The active-site Schiff-base intermediate with dihydroxyacetone-P is the Lys-212.

The protein belongs to the class I fructose-bisphosphate aldolase family.

The enzyme catalyses beta-D-fructose 1,6-bisphosphate = D-glyceraldehyde 3-phosphate + dihydroxyacetone phosphate. Its pathway is carbohydrate degradation; glycolysis; D-glyceraldehyde 3-phosphate and glycerone phosphate from D-glucose: step 4/4. In Staphylococcus epidermidis (strain ATCC 12228 / FDA PCI 1200), this protein is Fructose-bisphosphate aldolase class 1 (fda).